Here is a 497-residue protein sequence, read N- to C-terminus: Putative zinc finger and SCAN domain-containing protein 5D (497 aa).

The 83-residue stretch at 41 to 123 (KAGRRMFSCP…DLLRNNRRPK (83 aa)) folds into the SCAN box domain. The segment at 148-342 (PASVRDDPRG…GPAGAVSHPN (195 aa)) is disordered. A compositionally biased stretch (polar residues) spans 158-167 (VSSQRASSVN). Basic and acidic residues-rich tracts occupy residues 216 to 229 (PTLE…REEN) and 249 to 259 (KEGKEPKKRAS). C2H2-type zinc fingers lie at residues 352–374 (FACG…MRSH), 380–402 (FQCN…QRIH), 408–430 (YTCD…KRSH), 436–458 (YKCK…KLIH), and 464–486 (YKCP…QKTH).

The protein resides in the nucleus. The chain is Putative zinc finger and SCAN domain-containing protein 5D from Homo sapiens (Human).